Consider the following 371-residue polypeptide: Protein STRICTOSIDINE SYNTHASE-LIKE 7 (371 aa).

The N-terminal stretch at 1–25 (MPVLFSSRSLILSIIVPLLISIALY) is a signal peptide. Residues Asn-101, Asn-137, and Asn-285 are each glycosylated (N-linked (GlcNAc...) asparagine). Tyr-303 is subject to Phosphotyrosine.

It belongs to the strictosidine synthase family.

Its subcellular location is the vacuole. The protein is Protein STRICTOSIDINE SYNTHASE-LIKE 7 of Arabidopsis thaliana (Mouse-ear cress).